A 1027-amino-acid chain; its full sequence is D-2-hydroxyglutarate dehydrogenase (1027 aa).

The FAD-binding PCMH-type domain maps to 48–284; that stretch reads YQQLPQAILF…CEAKLNLLLI (237 aa). (R)-2-hydroxyglutarate-binding residues include R405 and H503. The region spanning 665 to 696 is the 4Fe-4S ferredoxin-type domain; sequence HEVKAAMDTCLACKACASQCPIKIDVPSFRAK. [4Fe-4S] cluster-binding residues include C674, C677, C680, and C684.

In the N-terminal section; belongs to the FAD-binding oxidoreductase/transferase type 4 family. In terms of assembly, homotetramer. [4Fe-4S] cluster is required as a cofactor. Requires FAD as cofactor.

The enzyme catalyses (R)-2-hydroxyglutarate + A = 2-oxoglutarate + AH2. Its function is as follows. Catalyzes the oxidation of D-2-hydroxyglutarate (D-2-HGA) to 2-oxoglutarate. Provides the way to recycle D-2-HGA produced during L-serine synthesis by SerA, by converting it back to 2-oxoglutarate. The physiological molecule that functions as the primary electron acceptor during D-2-HGA oxidation is unknown. This Haemophilus influenzae (strain ATCC 51907 / DSM 11121 / KW20 / Rd) protein is D-2-hydroxyglutarate dehydrogenase.